The primary structure comprises 214 residues: Protein GrpE (214 aa).

A compositionally biased stretch (polar residues) spans 1–13 (MKHTSEPTSQPDT). The tract at residues 1–61 (MKHTSEPTSQ…AAVAEATIEP (61 aa)) is disordered. A compositionally biased stretch (low complexity) spans 14-57 (QAAESAQSSAAAAGQAASAYSSQAQRASADAQAIAGDEAAVAEA).

Belongs to the GrpE family. As to quaternary structure, homodimer.

Its subcellular location is the cytoplasm. Functionally, participates actively in the response to hyperosmotic and heat shock by preventing the aggregation of stress-denatured proteins, in association with DnaK and GrpE. It is the nucleotide exchange factor for DnaK and may function as a thermosensor. Unfolded proteins bind initially to DnaJ; upon interaction with the DnaJ-bound protein, DnaK hydrolyzes its bound ATP, resulting in the formation of a stable complex. GrpE releases ADP from DnaK; ATP binding to DnaK triggers the release of the substrate protein, thus completing the reaction cycle. Several rounds of ATP-dependent interactions between DnaJ, DnaK and GrpE are required for fully efficient folding. This chain is Protein GrpE, found in Ralstonia nicotianae (strain ATCC BAA-1114 / GMI1000) (Ralstonia solanacearum).